The primary structure comprises 428 residues: Glutamate-1-semialdehyde 2,1-aminomutase (428 aa).

Lys-267 is modified (N6-(pyridoxal phosphate)lysine).

The protein belongs to the class-III pyridoxal-phosphate-dependent aminotransferase family. HemL subfamily. In terms of assembly, homodimer. Pyridoxal 5'-phosphate serves as cofactor.

The protein resides in the cytoplasm. The catalysed reaction is (S)-4-amino-5-oxopentanoate = 5-aminolevulinate. Its pathway is porphyrin-containing compound metabolism; protoporphyrin-IX biosynthesis; 5-aminolevulinate from L-glutamyl-tRNA(Glu): step 2/2. In Flavobacterium johnsoniae (strain ATCC 17061 / DSM 2064 / JCM 8514 / BCRC 14874 / CCUG 350202 / NBRC 14942 / NCIMB 11054 / UW101) (Cytophaga johnsonae), this protein is Glutamate-1-semialdehyde 2,1-aminomutase.